The primary structure comprises 594 residues: MSGAIFAPLEGPGALDAASGHPLVCPLCHAQYERPCLLDCFHDFCAGCLRGRTADGRVACPLCQHQTVVKGPSGLPPVDRLLQFLVDSSGDGVEAVHCANCDLDCSKQDAETACFCNTCGQPLCARCRDETHRARMFARHDIVALGQRSRDVLQKCPLHAEPYLMFSTDKKSLLCIRCFRDLQGESRAHCVDLESAYVQGCERLEQAVLAVKALQAATREAIALLQAMVEEVRRSAEEEAAAIHALFDSVQEKLAERKALLLQAVQSQYEEKDQAFKEQLSHLATLLPTLQIHLVICSSFLSLANKAEFLDLGYELMERLQGVVTRPHRLRPAQSSKIASDYRAEFARCLEPLLLLGPRRATGAQGGANTLAGGSGPKVLMGPSCPSPVRKVSRSPVQKPTLPRSISTKVLLADGEDTPFAEHCRHYEDSYRGLQAEVQNLKDQVQELHRDLTKHHSLIRAEIMADILHRSLRLDAQIDSEYASVEGMRAVFQEIWEESYQRLAGEQEIYEAQLRDLFQLKQENAHLTTITKHITPYVRSIAKVKERLEPRFQASADDESENPQTAYDASRNGETPASLLLPGSVASAEPPFVN.

An RING-type zinc finger spans residues 25–64 (CPLCHAQYERPCLLDCFHDFCAGCLRGRTADGRVACPLCQ). The B box-type; atypical zinc finger occupies 93–145 (VEAVHCANCDLDCSKQDAETACFCNTCGQPLCARCRDETHRARMFARHDIVAL). 4 residues coordinate Zn(2+): cysteine 98, cysteine 101, cysteine 127, and histidine 132. Residues 369-400 (NTLAGGSGPKVLMGPSCPSPVRKVSRSPVQKP) form a disordered region. Residues 424 to 458 (CRHYEDSYRGLQAEVQNLKDQVQELHRDLTKHHSL) adopt a coiled-coil conformation. A disordered region spans residues 552–594 (FQASADDESENPQTAYDASRNGETPASLLLPGSVASAEPPFVN). Positions 562 to 575 (NPQTAYDASRNGET) are enriched in polar residues.

Interacts with the core-glycosylated, but not the fully glycosylated form of KCNH2/HERG. Interacts with DNAJA1 and HSPA8. Interacts (via the C-terminus) with HSPA1A; this interaction additively increases KCNH2 expression.

The protein resides in the cytoplasm. In terms of biological role, plays a role in cardiac repolarization possibly by stabilizing membrane expression of the potassium channel KCNH2/HERG, or by assisting its synthesis, folding or export from the endoplasmic reticulum, in a heat shock protein-dependent manner. The protein is RING finger protein 207 (RNF207) of Oryctolagus cuniculus (Rabbit).